The following is a 469-amino-acid chain: Argininosuccinate lyase (469 aa).

This sequence belongs to the lyase 1 family. Argininosuccinate lyase subfamily.

The protein localises to the cytoplasm. It catalyses the reaction 2-(N(omega)-L-arginino)succinate = fumarate + L-arginine. The protein operates within amino-acid biosynthesis; L-arginine biosynthesis; L-arginine from L-ornithine and carbamoyl phosphate: step 3/3. The protein is Argininosuccinate lyase of Burkholderia cenocepacia (strain HI2424).